The primary structure comprises 448 residues: Probable glycine dehydrogenase (decarboxylating) subunit 1 (448 aa).

This sequence belongs to the GcvP family. N-terminal subunit subfamily. The glycine cleavage system is composed of four proteins: P, T, L and H. In this organism, the P 'protein' is a heterodimer of two subunits.

The catalysed reaction is N(6)-[(R)-lipoyl]-L-lysyl-[glycine-cleavage complex H protein] + glycine + H(+) = N(6)-[(R)-S(8)-aminomethyldihydrolipoyl]-L-lysyl-[glycine-cleavage complex H protein] + CO2. Its function is as follows. The glycine cleavage system catalyzes the degradation of glycine. The P protein binds the alpha-amino group of glycine through its pyridoxal phosphate cofactor; CO(2) is released and the remaining methylamine moiety is then transferred to the lipoamide cofactor of the H protein. The polypeptide is Probable glycine dehydrogenase (decarboxylating) subunit 1 (gcvPA) (Bacillus subtilis (strain 168)).